A 134-amino-acid chain; its full sequence is uncharacterized protein (134 aa).

This is an uncharacterized protein from Archaeoglobus fulgidus (strain ATCC 49558 / DSM 4304 / JCM 9628 / NBRC 100126 / VC-16).